The sequence spans 145 residues: Sperm mitochondrial-associated cysteine-rich protein (145 aa).

Phosphoserine is present on residues Ser-38, Ser-45, Ser-113, and Ser-131. Residues 105-145 form a disordered region; that stretch reads CSSENKTESDSDGSGQTQDRGAQTQQSPQGGQGNWNQKKTK. Polar residues predominate over residues 116–145; that stretch reads DGSGQTQDRGAQTQQSPQGGQGNWNQKKTK.

In terms of tissue distribution, testis. Selectively expressed in the spermatids of seminiferous tubules and in flagella of epididymal sperm.

It is found in the cytoplasm. The protein localises to the mitochondrion membrane. Its function is as follows. Involved in sperm motility. Its absence is associated with genetic background dependent male infertility. Infertility may be due to reduced sperm motility in the female reproductive tract and inability to penetrate the oocyte zona pellucida. The protein is Sperm mitochondrial-associated cysteine-rich protein (Smcp) of Rattus norvegicus (Rat).